We begin with the raw amino-acid sequence, 120 residues long: Phosphoribosyl-AMP cyclohydrolase (120 aa).

Asp-75 provides a ligand contact to Mg(2+). Zn(2+) is bound at residue Cys-76. Asp-77 and Asp-79 together coordinate Mg(2+). 2 residues coordinate Zn(2+): Cys-92 and Cys-99.

It belongs to the PRA-CH family. As to quaternary structure, homodimer. The cofactor is Mg(2+). Zn(2+) is required as a cofactor.

The protein localises to the cytoplasm. The enzyme catalyses 1-(5-phospho-beta-D-ribosyl)-5'-AMP + H2O = 1-(5-phospho-beta-D-ribosyl)-5-[(5-phospho-beta-D-ribosylamino)methylideneamino]imidazole-4-carboxamide. It participates in amino-acid biosynthesis; L-histidine biosynthesis; L-histidine from 5-phospho-alpha-D-ribose 1-diphosphate: step 3/9. In terms of biological role, catalyzes the hydrolysis of the adenine ring of phosphoribosyl-AMP. The sequence is that of Phosphoribosyl-AMP cyclohydrolase from Methanosarcina acetivorans (strain ATCC 35395 / DSM 2834 / JCM 12185 / C2A).